Here is a 362-residue protein sequence, read N- to C-terminus: Phosphoserine aminotransferase (362 aa).

Residues serine 9 and arginine 42 each coordinate L-glutamate. Residues 76 to 77 (GR), tryptophan 102, threonine 153, aspartate 174, and glutamine 197 contribute to the pyridoxal 5'-phosphate site. Lysine 198 carries the N6-(pyridoxal phosphate)lysine modification. Position 239–240 (239–240 (NT)) interacts with pyridoxal 5'-phosphate.

The protein belongs to the class-V pyridoxal-phosphate-dependent aminotransferase family. SerC subfamily. Homodimer. Pyridoxal 5'-phosphate is required as a cofactor.

It is found in the cytoplasm. The catalysed reaction is O-phospho-L-serine + 2-oxoglutarate = 3-phosphooxypyruvate + L-glutamate. It carries out the reaction 4-(phosphooxy)-L-threonine + 2-oxoglutarate = (R)-3-hydroxy-2-oxo-4-phosphooxybutanoate + L-glutamate. Its pathway is amino-acid biosynthesis; L-serine biosynthesis; L-serine from 3-phospho-D-glycerate: step 2/3. It functions in the pathway cofactor biosynthesis; pyridoxine 5'-phosphate biosynthesis; pyridoxine 5'-phosphate from D-erythrose 4-phosphate: step 3/5. In terms of biological role, catalyzes the reversible conversion of 3-phosphohydroxypyruvate to phosphoserine and of 3-hydroxy-2-oxo-4-phosphonooxybutanoate to phosphohydroxythreonine. The chain is Phosphoserine aminotransferase from Escherichia coli O6:K15:H31 (strain 536 / UPEC).